The sequence spans 356 residues: Putative aminopeptidase FrvX (356 aa).

2 residues coordinate a divalent metal cation: His-61 and Asp-175. Glu-205 acts as the Proton acceptor in catalysis. A divalent metal cation is bound by residues Glu-206, Asp-228, and His-316.

It belongs to the peptidase M42 family. A divalent metal cation is required as a cofactor.

In Escherichia coli (strain K12), this protein is Putative aminopeptidase FrvX (frvX).